A 341-amino-acid chain; its full sequence is MRLRRIKTLIVDDSLLFRETLARGISRDPAIEVVATAVDAFMARDMIIKYKPDVMTLDVEMPRMSGIEFLRRLMPQYPLPVVMISALSESVFDALNAGAIDFVAKPDMNRNRDLDSFFSELILKIKIASVARLGRRAEVSKLLPTGKSQADQGWVIAIGASTGGPEAIYQIVKNFNQDTPGTVIVQHMPAGFTRMYAERLNDTCVVEVKEAQNNDQVKMGQVLIAPGEYQMRLKQKAGNYMVECHPGEKVNGHCPAVDVLFDSVAQSAGARAVGIILTGMGSDGARGLLAMRKAGARTIGQDEASCVVYGMPKVAYELGAVEKQYPLNYIGQALYKLINQL.

The 114-residue stretch at 7-120 (KTLIVDDSLL…NRDLDSFFSE (114 aa)) folds into the Response regulatory domain. Aspartate 58 is subject to 4-aspartylphosphate. Positions 155-341 (VIAIGASTGG…QALYKLINQL (187 aa)) constitute a CheB-type methylesterase domain. Residues serine 161, histidine 187, and aspartate 283 contribute to the active site.

Belongs to the CheB family. In terms of processing, phosphorylated by CheA. Phosphorylation of the N-terminal regulatory domain activates the methylesterase activity.

Its subcellular location is the cytoplasm. It carries out the reaction [protein]-L-glutamate 5-O-methyl ester + H2O = L-glutamyl-[protein] + methanol + H(+). The enzyme catalyses L-glutaminyl-[protein] + H2O = L-glutamyl-[protein] + NH4(+). In terms of biological role, involved in chemotaxis. Part of a chemotaxis signal transduction system that modulates chemotaxis in response to various stimuli. Catalyzes the demethylation of specific methylglutamate residues introduced into the chemoreceptors (methyl-accepting chemotaxis proteins or MCP) by CheR. Also mediates the irreversible deamidation of specific glutamine residues to glutamic acid. This chain is Protein-glutamate methylesterase/protein-glutamine glutaminase 2, found in Syntrophomonas wolfei subsp. wolfei (strain DSM 2245B / Goettingen).